We begin with the raw amino-acid sequence, 265 residues long: Cytochrome c oxidase subunit 3 (265 aa).

A run of 7 helical transmembrane segments spans residues 16–36 (PWPL…VMYM), 41–61 (GGGT…FVWW), 85–105 (GIIL…WAFF), 138–158 (LILL…LAGL), 162–182 (AVYA…FQGI), 200–220 (FFLA…FLII), and 242–262 (AFYW…IYWW).

Belongs to the cytochrome c oxidase subunit 3 family. Component of the cytochrome c oxidase (complex IV, CIV), a multisubunit enzyme composed of a catalytic core of 3 subunits and several supernumerary subunits. The complex exists as a monomer or a dimer and forms supercomplexes (SCs) in the inner mitochondrial membrane with ubiquinol-cytochrome c oxidoreductase (cytochrome b-c1 complex, complex III, CIII).

It is found in the mitochondrion inner membrane. It catalyses the reaction 4 Fe(II)-[cytochrome c] + O2 + 8 H(+)(in) = 4 Fe(III)-[cytochrome c] + 2 H2O + 4 H(+)(out). In terms of biological role, component of the cytochrome c oxidase, the last enzyme in the mitochondrial electron transport chain which drives oxidative phosphorylation. The respiratory chain contains 3 multisubunit complexes succinate dehydrogenase (complex II, CII), ubiquinol-cytochrome c oxidoreductase (cytochrome b-c1 complex, complex III, CIII) and cytochrome c oxidase (complex IV, CIV), that cooperate to transfer electrons derived from NADH and succinate to molecular oxygen, creating an electrochemical gradient over the inner membrane that drives transmembrane transport and the ATP synthase. Cytochrome c oxidase is the component of the respiratory chain that catalyzes the reduction of oxygen to water. Electrons originating from reduced cytochrome c in the intermembrane space (IMS) are transferred via the dinuclear copper A center (CU(A)) of subunit 2 and heme A of subunit 1 to the active site in subunit 1, a binuclear center (BNC) formed by heme A3 and copper B (CU(B)). The BNC reduces molecular oxygen to 2 water molecules using 4 electrons from cytochrome c in the IMS and 4 protons from the mitochondrial matrix. This is Cytochrome c oxidase subunit 3 (COX3) from Marchantia polymorpha (Common liverwort).